A 794-amino-acid polypeptide reads, in one-letter code: Solute carrier family 26 member 9 (794 aa).

The Cytoplasmic segment spans residues 1 to 70; the sequence is MNKVRPRYII…WLPKYNIKGN (70 aa). Residues 71–96 form a helical membrane-spanning segment; that stretch reads LLNDALGGISAGTIQIPQGMAFALLA. Topologically, residues 97–100 are extracellular; the sequence is NLPP. Residues 101 to 109 traverse the membrane as a helical segment; it reads VNGLYSSFF. At 110–129 the chain is on the cytoplasmic side; it reads PLVVYFFMGGIPQMVPGTFA. A helical transmembrane segment spans residues 130 to 142; it reads VISIIVGNVCLKL. At 143 to 160 the chain is on the extracellular side; sequence APESHFQNVTSNGTITNI. A helical membrane pass occupies residues 161 to 189; the sequence is EAMNTARMHISATLACLTAIIQIALSFVQ. Over 190–199 the chain is Cytoplasmic; that stretch reads FGFVAIYLSE. Residues 200-222 traverse the membrane as a helical segment; the sequence is SFIRGFMTAAGLQILISVLKYIF. Topologically, residues 223 to 235 are extracellular; it reads GVSIPPYSGVLAI. Residues 236–244 constitute an intramembrane region (helical); it reads IYTFIDICK. The Extracellular portion of the chain corresponds to 245-252; that stretch reads ELPKTNVA. Residues 253–273 traverse the membrane as a helical segment; that stretch reads SLIFALISTVLLIIVKELNMK. At 274–284 the chain is on the cytoplasmic side; that stretch reads FMHKIRFPIPM. A helical membrane pass occupies residues 285–297; the sequence is EIIIVIVATAVSG. Residues 298 to 332 lie on the Extracellular side of the membrane; the sequence is SFKLPERYHMNVVGHIPLGFPSPTVPNVTQWDEMV. A helical transmembrane segment spans residues 333–356; that stretch reads GTAFSLAIVGYVINLAMGRTLGAK. At 357–363 the chain is on the cytoplasmic side; it reads HGFDVDA. The chain crosses the membrane as a helical span at residues 364-377; that stretch reads NQEMLALGSGNFFG. The Extracellular segment spans residues 378–388; the sequence is SFFFIHVICCA. A helical membrane pass occupies residues 389–398; that stretch reads LSVTLAVDGA. At 399–403 the chain is on the cytoplasmic side; that stretch reads GGKSQ. Residues 404–417 traverse the membrane as a helical segment; sequence IASFFVMMSVMVTI. The Extracellular segment spans residues 418–429; the sequence is LALGTYLNPLPK. Residues 430–455 traverse the membrane as a helical segment; that stretch reads SVLGALIAVNLKNSLKQLSDPFYLWK. At 456 to 459 the chain is on the cytoplasmic side; it reads KSKL. Residues 460-474 traverse the membrane as a helical segment; that stretch reads DCLVWLVSFFSTFIL. The Extracellular segment spans residues 475–477; that stretch reads GLP. A helical transmembrane segment spans residues 478-496; sequence YGLAVGVAFSILVVIFNTQ. Residues 497 to 794 are Cytoplasmic-facing; the sequence is FRNGSSLNQV…MFQTEIQTAL (298 aa). Positions 517-739 constitute an STAS domain; it reads VYSKVQPIDG…ITVHDAVLYA (223 aa).

It belongs to the SLC26A/SulP transporter (TC 2.A.53) family. Homodimer.

It localises to the cell membrane. Its subcellular location is the endomembrane system. It carries out the reaction chloride(in) = chloride(out). The catalysed reaction is hydrogencarbonate(in) + chloride(out) = hydrogencarbonate(out) + chloride(in). With respect to regulation, inhibited by ammonium and thiosulfate. In terms of biological role, ion transporter that can act both as an ion channel and anion exchanger. Mainly acts as a chloride channel, which mediate uncoupled chloride anion transport in an alternate-access mechanism where a saturable binding site is alternately exposed to either one or the other side of the membrane. Also acts as a DIDS- and thiosulfate- sensitive anion exchanger the exchange of chloride for bicarbonate ions across the cell membrane. This chain is Solute carrier family 26 member 9 (slc26a9), found in Xenopus tropicalis (Western clawed frog).